The sequence spans 617 residues: Secretogranin-2 (617 aa).

An N-terminal signal peptide occupies residues 1–27 (MAEAKTHWLGAALSLIPLIFLISGAEA). Residues 28 to 30 (ASF) constitute a propeptide that is removed on maturation. The tract at residues 120–143 (QAENEPQSAPKENKPYALNSEKNF) is disordered. Sulfotyrosine is present on Tyr-151. A Phosphoserine modification is found at Ser-174. The tract at residues 182–200 (TNEIVEEQYTPQSLATLES) is O-glycosylated at one site. 2 stretches are compositionally biased toward basic and acidic residues: residues 257–284 (IESQ…EMKR) and 293–302 (EDLRKESKDQ). The tract at residues 257-302 (IESQTQEEVRDSKENIEKNEQINDEMKRSGQLGIQEEDLRKESKDQ) is disordered. At Ser-268 the chain carries Phosphoserine. Residues Ser-432, Ser-532, Ser-555, and Ser-556 each carry the phosphoserine modification. The tract at residues 552–583 (NQGSSQETDKLAPVSKRFPVGPPKNDDTPNRQ) is disordered.

This sequence belongs to the chromogranin/secretogranin protein family. In terms of assembly, interacts with Secretogranin III/SCG3. Post-translationally, O-glycosylated.

The protein resides in the secreted. Functionally, neuroendocrine protein of the granin family that regulates the biogenesis of secretory granules. The sequence is that of Secretogranin-2 (SCG2) from Homo sapiens (Human).